Consider the following 293-residue polypeptide: NAD-dependent protein deacetylase (293 aa).

A Deacetylase sirtuin-type domain is found at 5–282 (PAHDHHTLQD…LHAPPHLPRA (278 aa)). NAD(+) is bound by residues 27 to 47 (GAGC…GGWK) and 105 to 108 (QNVD). Catalysis depends on histidine 123, which acts as the Proton acceptor. Zn(2+) is bound by residues cysteine 131, cysteine 134, cysteine 182, and cysteine 185. Residues 222–224 (GSS), 248–250 (NFG), and cysteine 266 contribute to the NAD(+) site.

It belongs to the sirtuin family. Class II subfamily. Zn(2+) is required as a cofactor.

It is found in the cytoplasm. It catalyses the reaction N(6)-acetyl-L-lysyl-[protein] + NAD(+) + H2O = 2''-O-acetyl-ADP-D-ribose + nicotinamide + L-lysyl-[protein]. NAD-dependent protein deacetylase which modulates the activities of several enzymes which are inactive in their acetylated form. The polypeptide is NAD-dependent protein deacetylase (Xanthomonas axonopodis pv. citri (strain 306)).